The chain runs to 364 residues: Uroporphyrinogen decarboxylase (364 aa).

Substrate is bound by residues 49 to 53, D98, Y173, S228, and H341; that span reads RQAGR.

The protein belongs to the uroporphyrinogen decarboxylase family. In terms of assembly, homodimer.

Its subcellular location is the cytoplasm. It carries out the reaction uroporphyrinogen III + 4 H(+) = coproporphyrinogen III + 4 CO2. The protein operates within porphyrin-containing compound metabolism; protoporphyrin-IX biosynthesis; coproporphyrinogen-III from 5-aminolevulinate: step 4/4. Functionally, catalyzes the decarboxylation of four acetate groups of uroporphyrinogen-III to yield coproporphyrinogen-III. This chain is Uroporphyrinogen decarboxylase, found in Protochlamydia amoebophila (strain UWE25).